We begin with the raw amino-acid sequence, 332 residues long: 2,3-diketo-L-gulonate reductase (332 aa).

Residue H44 is the Proton donor of the active site. Residues 168 to 174 (ITMVDMS), 224 to 225 (WK), and 304 to 306 (GHE) each bind NAD(+).

The protein belongs to the LDH2/MDH2 oxidoreductase family. DlgD subfamily. As to quaternary structure, homodimer.

It localises to the cytoplasm. It carries out the reaction 3-dehydro-L-gulonate + NAD(+) = 2,3-dioxo-L-gulonate + NADH + H(+). The enzyme catalyses 3-dehydro-L-gulonate + NADP(+) = 2,3-dioxo-L-gulonate + NADPH + H(+). Functionally, catalyzes the reduction of 2,3-diketo-L-gulonate in the presence of NADH, to form 3-keto-L-gulonate. The sequence is that of 2,3-diketo-L-gulonate reductase from Escherichia coli (strain K12 / MC4100 / BW2952).